Consider the following 236-residue polypeptide: Protein INCA1 (236 aa).

Phosphoserine is present on serine 23. Residues 75-99 (GLYPPEQLPPPEMLWRRKKRRPCLE) form an interaction with CCNA1 and CCNA1/CDK2 complex; essential for CDK2 inhibitory activity region. The short motif at 90 to 95 (RRKKRR) is the Nuclear localization signal element. Threonine 182 carries the post-translational modification Phosphothreonine. Residues serine 191 and serine 194 each carry the phosphoserine modification.

This sequence belongs to the INCA family. Interacts with CCNA1. Interacts with CCNA2, CCNB1 and CCNE1. Found in a complex with CCNA1 and CDK2. Interacts with ZNF16; the interaction inhibits INCA1 activity and induces the cell cycle process. Interacts with SPACA9. Interacts with the CCNA1/CDK2 complex. Interacts with ING5, DAZAP2, RNF26, USP15, SPOUT1, DPH7, TRIM26 and RAB5C. Phosphorylated when part of a complex with CCNA1 and CDK2. Strongly phosphorylated by CDK2 on its C-terminal region spanning amino acid 149-221. Less intensively phosphorylated by CDK2 on its first 75 amino acid residues. In terms of tissue distribution, detected in testis, and at lower levels in ovary. Detected at very low levels in testis tumors. Down-regulated in bone marrow cells in acute myeloid and lymphoid leukemia patients as compared with normal bone marrow cells.

It localises to the nucleus. The protein resides in the cytoplasm. Functionally, binds to CDK2-bound cyclins and inhibits the kinase activity of CDK2; binding to cyclins is critical for its function as CDK inhibitor. Inhibits cell growth and cell proliferation and may play a role in cell cycle control. Required for ING5-mediated regulation of S-phase progression, enhancement of Fas-induced apoptosis and inhibition of cell growth. This Homo sapiens (Human) protein is Protein INCA1 (INCA1).